Here is a 205-residue protein sequence, read N- to C-terminus: UPF0111 protein YkaA (205 aa).

It belongs to the UPF0111 family.

This Bacillus subtilis (strain 168) protein is UPF0111 protein YkaA (ykaA).